A 492-amino-acid polypeptide reads, in one-letter code: Cytochrome P450 2A2 (492 aa).

Cysteine 437 serves as a coordination point for heme.

Belongs to the cytochrome P450 family. It depends on heme as a cofactor. Liver specific.

It is found in the endoplasmic reticulum membrane. It localises to the microsome membrane. The enzyme catalyses an organic molecule + reduced [NADPH--hemoprotein reductase] + O2 = an alcohol + oxidized [NADPH--hemoprotein reductase] + H2O + H(+). In terms of biological role, highly active in the 15-alpha-hydroxylation of testosterone. The polypeptide is Cytochrome P450 2A2 (Cyp2a2) (Rattus norvegicus (Rat)).